The following is a 240-amino-acid chain: Uridylate kinase (240 aa).

13–16 (KLSG) is an ATP binding site. The tract at residues 21–26 (GEKGFG) is involved in allosteric activation by GTP. Residue Gly-55 participates in UMP binding. Residues Gly-56 and Arg-60 each coordinate ATP. Residues Asp-75 and 136-143 (IGNPYFST) each bind UMP. Positions 164, 170, and 173 each coordinate ATP.

The protein belongs to the UMP kinase family. Homohexamer.

It localises to the cytoplasm. It carries out the reaction UMP + ATP = UDP + ADP. It functions in the pathway pyrimidine metabolism; CTP biosynthesis via de novo pathway; UDP from UMP (UMPK route): step 1/1. With respect to regulation, allosterically activated by GTP. Inhibited by UTP. Its function is as follows. Catalyzes the reversible phosphorylation of UMP to UDP. This Staphylococcus aureus (strain Newman) protein is Uridylate kinase.